Reading from the N-terminus, the 283-residue chain is Release factor glutamine methyltransferase (283 aa).

S-adenosyl-L-methionine is bound by residues 121-125, Asp144, and Asn188; that span reads GTGSG. 188-191 lines the substrate pocket; that stretch reads NPPY.

Belongs to the protein N5-glutamine methyltransferase family. PrmC subfamily.

It carries out the reaction L-glutaminyl-[peptide chain release factor] + S-adenosyl-L-methionine = N(5)-methyl-L-glutaminyl-[peptide chain release factor] + S-adenosyl-L-homocysteine + H(+). Its function is as follows. Methylates the class 1 translation termination release factors RF1/PrfA and RF2/PrfB on the glutamine residue of the universally conserved GGQ motif. This is Release factor glutamine methyltransferase from Bacillus anthracis.